A 445-amino-acid chain; its full sequence is Inner membrane metabolite transport protein YgcS (445 aa).

Over 1–22 (MNTSPVRMDDLPLNRFHCRIAA) the chain is Cytoplasmic. Residues 23–43 (LTFGAHLTDGYVLGVIGYAII) form a helical membrane-spanning segment. Residues 44–56 (QLTPAMQLTPFMA) lie on the Periplasmic side of the membrane. A helical membrane pass occupies residues 57–77 (GMIGGSALLGLFLGSLVLGWI). At 78–85 (SDHIGRQK) the chain is on the cytoplasmic side. Residues 86 to 106 (IFTFSFLLITLASFLQFFATT) form a helical membrane-spanning segment. Residues 107–114 (PEHLIGLR) lie on the Periplasmic side of the membrane. The helical transmembrane segment at 115–135 (ILIGIGLGGDYSVGHTLLAEF) threads the bilayer. The Cytoplasmic segment spans residues 136–142 (SPRRHRG). A helical membrane pass occupies residues 143–163 (ILLGAFSVVWTVGYVLASIAG). Topologically, residues 164–175 (HHFISENPEAWR) are periplasmic. Residues 176–196 (WLLASAALPALLITLLRWGTP) form a helical membrane-spanning segment. The Cytoplasmic segment spans residues 197–253 (ESPRWLLRQGRFAEAHAIVHRYFGPHVLLGDEVVTATHKHIKTLFSSRYWRRTAFNS). Residues 254–274 (VFFVCLVIPWFVIYTWLPTIA) traverse the membrane as a helical segment. Topologically, residues 275–286 (QTIGLEDALTAS) are periplasmic. A helical membrane pass occupies residues 287–307 (LMLNALLIVGALLGLVLTHLL). The Cytoplasmic segment spans residues 308–311 (AHRK). The helical transmembrane segment at 312–332 (FLLGSFLLLAATLVVMACLPS) threads the bilayer. Over 333–337 (GSSLT) the chain is Periplasmic. A helical membrane pass occupies residues 338 to 358 (LLLFVLFSTTISAVSNLVGIL). Over 359–369 (PAESFPTDIRS) the chain is Cytoplasmic. The helical transmembrane segment at 370-390 (LGVGFATAMSRLGAAVSTGLL) threads the bilayer. Residues 391–400 (PWVLAQWGMQ) are Periplasmic-facing. Residues 401–421 (VTLLLLATVLLVGFVVTWLWA) form a helical membrane-spanning segment. Residues 422–445 (PETKALPLVAAGNVGGANEHSVSV) lie on the Cytoplasmic side of the membrane.

It belongs to the major facilitator superfamily. Sugar transporter (TC 2.A.1.1) family.

It is found in the cell inner membrane. This Escherichia coli (strain K12) protein is Inner membrane metabolite transport protein YgcS (ygcS).